Here is a 367-residue protein sequence, read N- to C-terminus: tRNA 2-selenouridine synthase (367 aa).

Positions 15 to 138 (FLQARPLIDV…LRTFLIQILE (124 aa)) constitute a Rhodanese domain. Residue C98 is the S-selanylcysteine intermediate of the active site.

This sequence belongs to the SelU family. Monomer.

It carries out the reaction 5-methylaminomethyl-2-thiouridine(34) in tRNA + selenophosphate + (2E)-geranyl diphosphate + H2O + H(+) = 5-methylaminomethyl-2-selenouridine(34) in tRNA + (2E)-thiogeraniol + phosphate + diphosphate. The enzyme catalyses 5-methylaminomethyl-2-thiouridine(34) in tRNA + (2E)-geranyl diphosphate = 5-methylaminomethyl-S-(2E)-geranyl-thiouridine(34) in tRNA + diphosphate. It catalyses the reaction 5-methylaminomethyl-S-(2E)-geranyl-thiouridine(34) in tRNA + selenophosphate + H(+) = 5-methylaminomethyl-2-(Se-phospho)selenouridine(34) in tRNA + (2E)-thiogeraniol. The catalysed reaction is 5-methylaminomethyl-2-(Se-phospho)selenouridine(34) in tRNA + H2O = 5-methylaminomethyl-2-selenouridine(34) in tRNA + phosphate. Involved in the post-transcriptional modification of the uridine at the wobble position (U34) of tRNA(Lys), tRNA(Glu) and tRNA(Gln). Catalyzes the conversion of 2-thiouridine (S2U-RNA) to 2-selenouridine (Se2U-RNA). Acts in a two-step process involving geranylation of 2-thiouridine (S2U) to S-geranyl-2-thiouridine (geS2U) and subsequent selenation of the latter derivative to 2-selenouridine (Se2U) in the tRNA chain. This is tRNA 2-selenouridine synthase from Shewanella denitrificans (strain OS217 / ATCC BAA-1090 / DSM 15013).